A 188-amino-acid polypeptide reads, in one-letter code: EP300-interacting inhibitor of differentiation 1 (188 aa).

The interval 1 to 122 (MSEMAELSEL…PEEEQLSGAG (122 aa)) is disordered. 2 stretches are compositionally biased toward acidic residues: residues 53-64 (LEEEGPMEEEEA) and 94-117 (FESE…EEEQ). Residues 55–121 (EEGPMEEEEA…YPEEEQLSGA (67 aa)) form an interaction with NR0B2 region. Residues 179–183 (LGCDE) carry the LXCXE motif motif.

As to quaternary structure, interacts via its LXCXE motif with the entire pocket region of RB1. Interacts with EP300, NR0B2 and TRIM27.

The protein localises to the nucleus. Its subcellular location is the cytoplasm. Functionally, interacts with RB1 and EP300 and acts as a repressor of MYOD1 transactivation. Inhibits EP300 and CBP histone acetyltransferase activity. May be involved in coupling cell cycle exit to the transcriptional activation of genes required for cellular differentiation. May act as a candidate coinhibitory factor for NR0B2 that can be directly linked to transcription inhibitory mechanisms. In Pongo abelii (Sumatran orangutan), this protein is EP300-interacting inhibitor of differentiation 1.